Consider the following 285-residue polypeptide: Acetyl-coenzyme A carboxylase carboxyl transferase subunit beta (285 aa).

The CoA carboxyltransferase N-terminal domain occupies 29–285 (IMTKCPKCKK…ILKIHQEVSN (257 aa)). Residues cysteine 33, cysteine 36, cysteine 52, and cysteine 55 each contribute to the Zn(2+) site. The C4-type zinc finger occupies 33–55 (CPKCKKIMYTKELNENLNVCFNC).

It belongs to the AccD/PCCB family. As to quaternary structure, acetyl-CoA carboxylase is a heterohexamer composed of biotin carboxyl carrier protein (AccB), biotin carboxylase (AccC) and two subunits each of ACCase subunit alpha (AccA) and ACCase subunit beta (AccD). Requires Zn(2+) as cofactor.

The protein localises to the cytoplasm. It catalyses the reaction N(6)-carboxybiotinyl-L-lysyl-[protein] + acetyl-CoA = N(6)-biotinyl-L-lysyl-[protein] + malonyl-CoA. It functions in the pathway lipid metabolism; malonyl-CoA biosynthesis; malonyl-CoA from acetyl-CoA: step 1/1. In terms of biological role, component of the acetyl coenzyme A carboxylase (ACC) complex. Biotin carboxylase (BC) catalyzes the carboxylation of biotin on its carrier protein (BCCP) and then the CO(2) group is transferred by the transcarboxylase to acetyl-CoA to form malonyl-CoA. In Staphylococcus epidermidis (strain ATCC 12228 / FDA PCI 1200), this protein is Acetyl-coenzyme A carboxylase carboxyl transferase subunit beta.